The primary structure comprises 276 residues: F-actin-capping protein subunit alpha (276 aa).

The protein belongs to the F-actin-capping protein alpha subunit family. In terms of assembly, heterodimer of an alpha and a beta subunit.

It localises to the cytoplasm. The protein resides in the cytoskeleton. F-actin-capping proteins bind in a Ca(2+)-independent manner to the fast growing ends of actin filaments (barbed end) thereby blocking the exchange of subunits at these ends. Unlike other capping proteins (such as gelsolin and severin), these proteins do not sever actin filaments. In Aspergillus fumigatus (strain ATCC MYA-4609 / CBS 101355 / FGSC A1100 / Af293) (Neosartorya fumigata), this protein is F-actin-capping protein subunit alpha (cap1).